The following is a 265-amino-acid chain: Capsule polysaccharide export inner-membrane protein CtrC (265 aa).

The next 6 membrane-spanning stretches (helical) occupy residues 37-57, 64-84, 121-141, 147-167, 178-198, and 236-256; these read IGFLWLFVEPLLLTLVMVLMW, NVSALNIVAFTLTGYPMMMMW, IAGATIAQVVIMFALVIIGWI, IFYMLLAWLLMAMFAVGLGLV, FGKVWSTISFVMMPLSGVFFF, and NPWYILLCNLVLLLLGLAVVA. Residues 37–258 enclose the ABC transmembrane type-2 domain; the sequence is IGFLWLFVEP…LLGLAVVARF (222 aa).

The protein belongs to the ABC-2 integral membrane protein family.

The protein resides in the cell inner membrane. In terms of biological role, may form an ATP-driven capsule polysaccharide export apparatus, in association with the CtrB and CtrD proteins. This is Capsule polysaccharide export inner-membrane protein CtrC (ctrC) from Neisseria meningitidis serogroup A / serotype 4A (strain DSM 15465 / Z2491).